The chain runs to 812 residues: 1,4-alpha-glucan branching enzyme GlgB (812 aa).

A compositionally biased stretch (polar residues) spans 1–11; sequence MNNGDVNNGTA. Residues 1 to 83 form a disordered region; sequence MNNGDVNNGT…SALPADPPAV (83 aa). Residues 49–64 show a composition bias toward low complexity; it reads SSASAQPGQTADDPAV. A compositionally biased stretch (pro residues) spans 65–83; it reads PSAPPSAPPSALPADPPAV. Catalysis depends on aspartate 490, which acts as the Nucleophile. Glutamate 543 functions as the Proton donor in the catalytic mechanism.

Belongs to the glycosyl hydrolase 13 family. GlgB subfamily. Monomer.

It carries out the reaction Transfers a segment of a (1-&gt;4)-alpha-D-glucan chain to a primary hydroxy group in a similar glucan chain.. It functions in the pathway glycan biosynthesis; glycogen biosynthesis. Catalyzes the formation of the alpha-1,6-glucosidic linkages in glycogen by scission of a 1,4-alpha-linked oligosaccharide from growing alpha-1,4-glucan chains and the subsequent attachment of the oligosaccharide to the alpha-1,6 position. This Frankia casuarinae (strain DSM 45818 / CECT 9043 / HFP020203 / CcI3) protein is 1,4-alpha-glucan branching enzyme GlgB.